The following is a 181-amino-acid chain: Oligoribonuclease (181 aa).

The Exonuclease domain maps to 8 to 171 (LIWIDLEMTG…DDIRESVAEL (164 aa)). Tyr129 is an active-site residue.

This sequence belongs to the oligoribonuclease family.

It is found in the cytoplasm. Its function is as follows. 3'-to-5' exoribonuclease specific for small oligoribonucleotides. The polypeptide is Oligoribonuclease (Yersinia pseudotuberculosis serotype O:1b (strain IP 31758)).